The sequence spans 504 residues: ATP synthase subunit alpha (504 aa).

Residue 171–178 (GDRQTGKT) coordinates ATP.

This sequence belongs to the ATPase alpha/beta chains family. F-type ATPases have 2 components, CF(1) - the catalytic core - and CF(0) - the membrane proton channel. CF(1) has five subunits: alpha(3), beta(3), gamma(1), delta(1), epsilon(1). CF(0) has three main subunits: a(1), b(2) and c(9-12). The alpha and beta chains form an alternating ring which encloses part of the gamma chain. CF(1) is attached to CF(0) by a central stalk formed by the gamma and epsilon chains, while a peripheral stalk is formed by the delta and b chains.

The protein localises to the cell inner membrane. The enzyme catalyses ATP + H2O + 4 H(+)(in) = ADP + phosphate + 5 H(+)(out). Its function is as follows. Produces ATP from ADP in the presence of a proton gradient across the membrane. The alpha chain is a regulatory subunit. The chain is ATP synthase subunit alpha from Sulfurovum sp. (strain NBC37-1).